A 364-amino-acid polypeptide reads, in one-letter code: Inner membrane ABC transporter permease protein YejB (364 aa).

Topologically, residues 1-8 (MGAYLIRR) are periplasmic. Residues 9-29 (LLLVIPTLWAIITINFFIVQI) traverse the membrane as a helical segment. The Cytoplasmic portion of the chain corresponds to 30 to 37 (APGGPVDQ). A helical transmembrane segment spans residues 38-58 (AIAAIEFGNAGVLPGAGGEGV). Residues 59 to 135 (RASHAQTGVG…LTLIKDSLPV (77 aa)) lie on the Periplasmic side of the membrane. Positions 133 to 348 (LPVSITLGLW…LIGLLLNIVS (216 aa)) constitute an ABC transmembrane type-1 domain. Residues 136–156 (SITLGLWSTLIIYLVSIPLGI) traverse the membrane as a helical segment. Over 157–172 (RKAVYNGSRFDVWSSA) the chain is Cytoplasmic. Residues 173 to 193 (FIIIGYAIPAFLFAILLIVFF) traverse the membrane as a helical segment. The Periplasmic portion of the chain corresponds to 194-224 (AGGSYFDLFPLRGLVSANFDSLPWYQKITDY). A helical membrane pass occupies residues 225–245 (LWHITLPVLATVIGGFAALTM). The Cytoplasmic segment spans residues 246-284 (LTKNSFLDEVRKQYVVTARAKGVSEKNILWKHVFRNAML). A helical transmembrane segment spans residues 285 to 305 (LVIAGFPATFISMFFTGSLLI). Over 306–326 (EVMFSLNGLGLLGYEATVSRD) the chain is Periplasmic. Residues 327-347 (YPVMFGTLYIFTLIGLLLNIV) traverse the membrane as a helical segment. Residues 348–364 (SDISYTLVDPRIDFEGR) are Cytoplasmic-facing.

This sequence belongs to the binding-protein-dependent transport system permease family. OppBC subfamily.

Its subcellular location is the cell inner membrane. Functionally, probably part of a binding-protein-dependent transport system. Probably responsible for the translocation of the substrate across the membrane. This Escherichia coli O157:H7 protein is Inner membrane ABC transporter permease protein YejB (yejB).